Consider the following 306-residue polypeptide: Non-homologous end joining protein Ku 2 (306 aa).

Residues 21–206 enclose the Ku domain; that stretch reads ISFGLVNIGV…EVSKQEIDMA (186 aa). The tract at residues 233-306 is disordered; sequence LIDAKTKGTK…GSRDKTRKRA (74 aa). Residues 274 to 290 are compositionally biased toward basic residues; the sequence is RTSRRKTTASASRRRSS. Basic and acidic residues predominate over residues 291-300; sequence SNREKTGSRD.

This sequence belongs to the prokaryotic Ku family. In terms of assembly, homodimer. Interacts with LigD.

With LigD forms a non-homologous end joining (NHEJ) DNA repair enzyme, which repairs dsDNA breaks with reduced fidelity. Binds linear dsDNA with 5'- and 3'- overhangs but not closed circular dsDNA nor ssDNA. Recruits and stimulates the ligase activity of LigD. The sequence is that of Non-homologous end joining protein Ku 2 from Saccharopolyspora erythraea (strain ATCC 11635 / DSM 40517 / JCM 4748 / NBRC 13426 / NCIMB 8594 / NRRL 2338).